We begin with the raw amino-acid sequence, 53 residues long: Photosystem II reaction center protein K (53 aa).

Positions 1 to 16 are excised as a propeptide; it reads MFYTNVETLLNTNCFA. The chain crosses the membrane as a helical span at residues 28-48; sequence LVDVLPIIPLLFLLLAFVWQA.

This sequence belongs to the PsbK family. In terms of assembly, PSII is composed of 1 copy each of membrane proteins PsbA, PsbB, PsbC, PsbD, PsbE, PsbF, PsbH, PsbI, PsbJ, PsbK, PsbL, PsbM, PsbT, PsbY, PsbZ, Psb30/Ycf12, at least 3 peripheral proteins of the oxygen-evolving complex and a large number of cofactors. It forms dimeric complexes.

It localises to the plastid. The protein localises to the chloroplast thylakoid membrane. Its function is as follows. One of the components of the core complex of photosystem II (PSII). PSII is a light-driven water:plastoquinone oxidoreductase that uses light energy to abstract electrons from H(2)O, generating O(2) and a proton gradient subsequently used for ATP formation. It consists of a core antenna complex that captures photons, and an electron transfer chain that converts photonic excitation into a charge separation. This chain is Photosystem II reaction center protein K, found in Euglena anabaena (Euglenaria anabaena).